Consider the following 508-residue polypeptide: 3-octaprenyl-4-hydroxybenzoate carboxy-lyase (508 aa).

N178 lines the Mn(2+) pocket. Residues 181–183, 195–197, and 200–201 contribute to the prenylated FMN site; these read IYR, RWL, and RG. A Mn(2+)-binding site is contributed by E244. Residue D303 is the Proton donor of the active site.

It belongs to the UbiD family. Homohexamer. Prenylated FMN serves as cofactor. Requires Mn(2+) as cofactor.

The protein resides in the cell membrane. The enzyme catalyses a 4-hydroxy-3-(all-trans-polyprenyl)benzoate + H(+) = a 2-(all-trans-polyprenyl)phenol + CO2. Its pathway is cofactor biosynthesis; ubiquinone biosynthesis. Its function is as follows. Catalyzes the decarboxylation of 3-octaprenyl-4-hydroxy benzoate to 2-octaprenylphenol, an intermediate step in ubiquinone biosynthesis. In Cupriavidus taiwanensis (strain DSM 17343 / BCRC 17206 / CCUG 44338 / CIP 107171 / LMG 19424 / R1) (Ralstonia taiwanensis (strain LMG 19424)), this protein is 3-octaprenyl-4-hydroxybenzoate carboxy-lyase.